The sequence spans 172 residues: Adenine phosphoribosyltransferase (172 aa).

Belongs to the purine/pyrimidine phosphoribosyltransferase family. In terms of assembly, homodimer.

It is found in the cytoplasm. The catalysed reaction is AMP + diphosphate = 5-phospho-alpha-D-ribose 1-diphosphate + adenine. Its pathway is purine metabolism; AMP biosynthesis via salvage pathway; AMP from adenine: step 1/1. In terms of biological role, catalyzes a salvage reaction resulting in the formation of AMP, that is energically less costly than de novo synthesis. In Staphylococcus carnosus (strain TM300), this protein is Adenine phosphoribosyltransferase.